A 562-amino-acid polypeptide reads, in one-letter code: DNA ligase (562 aa).

Glu-250 contributes to the ATP binding site. The N6-AMP-lysine intermediate role is filled by Lys-252. Residues Arg-257, Arg-272, Glu-302, Phe-342, Arg-417, and Lys-423 each coordinate ATP.

Belongs to the ATP-dependent DNA ligase family. The cofactor is Mg(2+). Zn(2+) serves as cofactor.

It catalyses the reaction ATP + (deoxyribonucleotide)n-3'-hydroxyl + 5'-phospho-(deoxyribonucleotide)m = (deoxyribonucleotide)n+m + AMP + diphosphate.. The enzyme catalyses NAD(+) + (deoxyribonucleotide)n-3'-hydroxyl + 5'-phospho-(deoxyribonucleotide)m = (deoxyribonucleotide)n+m + AMP + beta-nicotinamide D-nucleotide.. DNA ligase that seals nicks in double-stranded DNA during DNA replication, DNA recombination and DNA repair. Can use both ATP and NAD(+), but NAD(+) may be a preferred nucleotide cofactor. The polypeptide is DNA ligase (Thermococcus onnurineus (strain NA1)).